The following is a 61-amino-acid chain: Putative antitoxin PYRAB11980 (61 aa).

It belongs to the UPF0165 family.

In terms of biological role, possibly the antitoxin component of a type II toxin-antitoxin (TA) system. This chain is Putative antitoxin PYRAB11980, found in Pyrococcus abyssi (strain GE5 / Orsay).